A 226-amino-acid chain; its full sequence is ATP synthase F(0) complex subunit a (226 aa).

A run of 6 helical transmembrane segments spans residues 6–26 (FASFITPTMMGFPIVVAIIMF), 68–88 (WTLMIVSLIMFIGSTNLLGLL), 97–117 (QLSMNLSMAIPLWAGAVITGF), 138–158 (IPMLIIIETISLFIQPMALAV), 164–184 (ITAGHLLMHLIGGATLVLMNI), and 189–209 (ATITFIILLLLTILEFAVALI).

It belongs to the ATPase A chain family. As to quaternary structure, component of the ATP synthase complex composed at least of ATP5F1A/subunit alpha, ATP5F1B/subunit beta, ATP5MC1/subunit c (homooctomer), MT-ATP6/subunit a, MT-ATP8/subunit 8, ATP5ME/subunit e, ATP5MF/subunit f, ATP5MG/subunit g, ATP5MK/subunit k, ATP5MJ/subunit j, ATP5F1C/subunit gamma, ATP5F1D/subunit delta, ATP5F1E/subunit epsilon, ATP5PF/subunit F6, ATP5PB/subunit b, ATP5PD/subunit d, ATP5PO/subunit OSCP. ATP synthase complex consists of a soluble F(1) head domain (subunits alpha(3) and beta(3)) - the catalytic core - and a membrane F(0) domain - the membrane proton channel (subunits c, a, 8, e, f, g, k and j). These two domains are linked by a central stalk (subunits gamma, delta, and epsilon) rotating inside the F1 region and a stationary peripheral stalk (subunits F6, b, d, and OSCP). Interacts with DNAJC30; interaction is direct.

It localises to the mitochondrion inner membrane. The enzyme catalyses H(+)(in) = H(+)(out). Subunit a, of the mitochondrial membrane ATP synthase complex (F(1)F(0) ATP synthase or Complex V) that produces ATP from ADP in the presence of a proton gradient across the membrane which is generated by electron transport complexes of the respiratory chain. ATP synthase complex consist of a soluble F(1) head domain - the catalytic core - and a membrane F(1) domain - the membrane proton channel. These two domains are linked by a central stalk rotating inside the F(1) region and a stationary peripheral stalk. During catalysis, ATP synthesis in the catalytic domain of F(1) is coupled via a rotary mechanism of the central stalk subunits to proton translocation. With the subunit c (ATP5MC1), forms the proton-conducting channel in the F(0) domain, that contains two crucial half-channels (inlet and outlet) that facilitate proton movement from the mitochondrial intermembrane space (IMS) into the matrix. Protons are taken up via the inlet half-channel and released through the outlet half-channel, following a Grotthuss mechanism. The polypeptide is ATP synthase F(0) complex subunit a (Mus musculus (Mouse)).